A 126-amino-acid polypeptide reads, in one-letter code: Holo-[acyl-carrier-protein] synthase (126 aa).

Mg(2+) is bound by residues Asp9 and Glu58.

Belongs to the P-Pant transferase superfamily. AcpS family. Requires Mg(2+) as cofactor.

Its subcellular location is the cytoplasm. The catalysed reaction is apo-[ACP] + CoA = holo-[ACP] + adenosine 3',5'-bisphosphate + H(+). Transfers the 4'-phosphopantetheine moiety from coenzyme A to a Ser of acyl-carrier-protein. The polypeptide is Holo-[acyl-carrier-protein] synthase (Buchnera aphidicola subsp. Schizaphis graminum (strain Sg)).